The chain runs to 692 residues: Elongation factor G 2 (692 aa).

The tr-type G domain maps to 8–283; the sequence is KDVRNIGIMA…GVVNYLPSPL (276 aa). Residues 17–24, 81–85, and 135–138 each bind GTP; these read AHIDAGKT, DTPGH, and NKMD.

Belongs to the TRAFAC class translation factor GTPase superfamily. Classic translation factor GTPase family. EF-G/EF-2 subfamily.

The protein resides in the cytoplasm. In terms of biological role, catalyzes the GTP-dependent ribosomal translocation step during translation elongation. During this step, the ribosome changes from the pre-translocational (PRE) to the post-translocational (POST) state as the newly formed A-site-bound peptidyl-tRNA and P-site-bound deacylated tRNA move to the P and E sites, respectively. Catalyzes the coordinated movement of the two tRNA molecules, the mRNA and conformational changes in the ribosome. This is Elongation factor G 2 from Desulfotalea psychrophila (strain LSv54 / DSM 12343).